Reading from the N-terminus, the 624-residue chain is ADP,ATP carrier protein 1, chloroplastic (624 aa).

Residues 1-79 (MEAVIQTRGL…KERSTEFICK (79 aa)) constitute a chloroplast transit peptide. Ala-80 carries the post-translational modification N-acetylalanine. 6 helical membrane-spanning segments follow: residues 108–128 (VEVATLKKIIPLGLMFFCILF), 182–202 (ALFYTVIVPFIIYFGAFGFVM), 240–260 (LFYVMAELWGSVVVSVLFWGF), 315–335 (AMMSIVVGMGLAICLLYWWVN), 446–466 (LLTGVAFFSLILFGGPFAPLV), and 545–565 (LANSTPYLGMILLVIVTAWLA). The disordered stretch occupies residues 579-624 (SEEELEKEMERASSVKIPVVSQDESGNGSLGESPSSSPEKSAPTNL). The segment covering 602–624 (ESGNGSLGESPSSSPEKSAPTNL) has biased composition (low complexity).

It belongs to the ADP/ATP translocase tlc (TC 2.A.12.2) family.

It localises to the plastid. It is found in the chloroplast membrane. Functionally, may function as an ATP importer. The protein is ADP,ATP carrier protein 1, chloroplastic (AATP1) of Arabidopsis thaliana (Mouse-ear cress).